Here is a 625-residue protein sequence, read N- to C-terminus: tRNA uridine 5-carboxymethylaminomethyl modification enzyme MnmG (625 aa).

Residues 11–16 (GAGHAG), Val-123, and Ser-178 contribute to the FAD site. 271–285 (GPRYCPSIETKIVTF) serves as a coordination point for NAD(+). Gln-368 provides a ligand contact to FAD.

It belongs to the MnmG family. As to quaternary structure, homodimer. Heterotetramer of two MnmE and two MnmG subunits. FAD serves as cofactor.

Its subcellular location is the cytoplasm. NAD-binding protein involved in the addition of a carboxymethylaminomethyl (cmnm) group at the wobble position (U34) of certain tRNAs, forming tRNA-cmnm(5)s(2)U34. The polypeptide is tRNA uridine 5-carboxymethylaminomethyl modification enzyme MnmG (Bacteroides fragilis (strain YCH46)).